A 1092-amino-acid polypeptide reads, in one-letter code: MTNTKYYPEVNSNADFAGLEREILKFWQDNNIFQKSIDDRNGELEFIFYDGPPFANGLPHYGHLLTGFIKDVYARYQTIKGKKVERRFGWDCHGLPAEMQSEKELGISGRLAIANFGIEKFNAHCRASVMKYANDWEEYVTRQARWVNFKNSYKTMDKNFMESVLWAFKELYNKGLLYESMRVMPYSWACETPLSNFETRLDNSYRERADKAVTVSFVLSHPVATTTGSFKEYRILAWTTTPWTLPSNLALAVGSDIDYALVPKNDVCYIIAAYSVSKYAKELGLSGEENFEIIKGSALQGLNYKSLFDYFENHPNSFKIFAGDFVVEGDGTGVVHMAPGFGEDDQILCESKGIELVCPVDNSGKFTKEIPDLEGLQVFDANDKIIIKLKEQGNWLKTEQYIHNYPHCWRTDTPLIYKAVPSWYVKVTQFKDRMVELNQQINWIPFHVKDNLFGKWLENARDWSISRNRFWGTPLPVWKSDDPKYPRIDVYGSIEELEKDFGVKVTDLHRPFIDELTRPNPDDPTGKSTMRRIEDVFDCWFESGSMPYGQAHYPFENKEWFEDHFPADFIVEYSAQTRGWFYTLMVLSTALFDRPPFLNCICHGIILDSTGQKLSKRLNNYADPLELFDKYGSDALRVTMLSSNVVKGQELLIDKDGKMVFDTLRLFIKPIWNAYHFFTMYANTDSLKGKLNFSSKNVLDVYILSKLKIAVQKIEESLDNFDTQTAYHAVSEFFEVLNNWYIRRSRARFWKSEKDTDKQNAYNTLYSCLDTMAIAMSALVPMISEAIYKGLHHCEERNDTALSGKSNVIVRKDTSLDKAISGVSHKIATALSVPCNDAISVHLCNYPTLSDFEINHELVATMDNVLDICSNSLFIRSTENIRVRQPLASIAIISKHNNNLKDFEDLIKDEINVKAVIYRDDLENYASKKLSINFPMLGKRLPHKMKEIIAASKKGEWEAIAGGLAICGETLNSDEYKLVLEPYSHIKGAASFENNSSLLILDLELTPELIEEGYARDIVRFIQQARKDADFSITDRILIEIISEFNLSKIIDNYGDFIKEQTLGEFAKNFTPDYVSKVELENHQIQLKVKKS.

The 'HIGH' region motif lies at 53-63 (PFANGLPHYGH). Positions 613 to 617 (KLSKR) match the 'KMSKS' region motif. Position 616 (Lys-616) interacts with ATP.

It belongs to the class-I aminoacyl-tRNA synthetase family. IleS type 2 subfamily. As to quaternary structure, monomer. Requires Zn(2+) as cofactor.

Its subcellular location is the cytoplasm. It carries out the reaction tRNA(Ile) + L-isoleucine + ATP = L-isoleucyl-tRNA(Ile) + AMP + diphosphate. In terms of biological role, catalyzes the attachment of isoleucine to tRNA(Ile). As IleRS can inadvertently accommodate and process structurally similar amino acids such as valine, to avoid such errors it has two additional distinct tRNA(Ile)-dependent editing activities. One activity is designated as 'pretransfer' editing and involves the hydrolysis of activated Val-AMP. The other activity is designated 'posttransfer' editing and involves deacylation of mischarged Val-tRNA(Ile). In Rickettsia africae (strain ESF-5), this protein is Isoleucine--tRNA ligase.